The following is a 160-amino-acid chain: N-acetyltransferase Pat (160 aa).

The N-acetyltransferase domain maps to 5–148; sequence IKIRKATKED…VYGEMRLTER (144 aa). CoA contacts are provided by leucine 79, valine 81, threonine 87, glycine 89, glycine 91, threonine 92, asparagine 118, lysine 123, and lysine 127.

This sequence belongs to the acetyltransferase family. GNAT subfamily.

It catalyses the reaction L-lysyl-[protein] + acetyl-CoA = N(6)-acetyl-L-lysyl-[protein] + CoA + H(+). In terms of biological role, modulates activity of albA1, the major archaeal DNA compaction protein, by decreasing albA1's nucleic acid binding affinity through acetylation of 'Lys-16'. The protein is N-acetyltransferase Pat of Saccharolobus solfataricus (strain ATCC 35092 / DSM 1617 / JCM 11322 / P2) (Sulfolobus solfataricus).